Consider the following 2488-residue polypeptide: PKS-NRPS hybrid synthetase swnK (2488 aa).

The segment at 33 to 422 (FEQVADRFPD…GRIDGVVKIR (390 aa)) is adenylation (A) domain. Residues 523–598 (QPTSELEQRI…ALAAYLAGTG (76 aa)) enclose the Carrier 1 domain. Ser558 carries the post-translational modification O-(pantetheine 4'-phosphoryl)serine. Residues 616-1039 (HEDIAIVSMA…GTNAHVIVEE (424 aa)) form the Ketosynthase family 3 (KS3) domain. Residues Cys785, His920, and His960 each act as for beta-ketoacyl synthase activity in the active site. Residues 1149 to 1471 (LFTGQGSQLP…SLSELHVRHV (323 aa)) are malonyl-CoA:ACP transacylase (MAT) domain. A ketoreductase (KR) domain region spans residues 1723-1901 (GAVLVTGGLG…ASSVAYGTWA (179 aa)). The Carrier 2 domain maps to 2002–2077 (SIVLHMVQAT…SLSEFLLCRL (76 aa)). Ser2037 carries the O-(pantetheine 4'-phosphoryl)serine modification. The disordered stretch occupies residues 2084-2103 (STSSPSDTDGATPSTPTSAA). Positions 2136 to 2364 (VTGATGFVGT…VLPVDYLCGT (229 aa)) are thioester reductase (TE) domain.

The protein in the N-terminal section; belongs to the NRP synthetase family.

It carries out the reaction L-pipecolate + malonyl-CoA + 2 NADPH + 4 H(+) = (8aS)-octahydroindolizin-1-one + CO2 + 2 NADP(+) + CoA + 2 H2O. It catalyses the reaction L-pipecolate + malonyl-CoA + 3 NADPH + 5 H(+) = (1R,8aS)-octahydroindolizin-1-ol + CO2 + 3 NADP(+) + CoA + 2 H2O. The catalysed reaction is L-pipecolate + malonyl-CoA + 3 NADPH + 5 H(+) = (1S,8aS)-octahydroindolizin-1-ol + CO2 + 3 NADP(+) + CoA + 2 H2O. It functions in the pathway mycotoxin biosynthesis. Functionally, PKS-NRPS hybrid synthetase; part of the gene cluster that mediates the biosynthesis of swainsonine (SW), a cytotoxic fungal alkaloid and a potential cancer therapy drug. Swainsonine production occurs via a multibranched pathway and is dispensable for fungal colonization of plants and infection of insect hosts. The first step of swainsonine biosynthesis is the production of the precursor pipecolic acid (PA) via conversion of L-lysine (Lys) to 1-piperideine-6-carboxylate (P6C) by the aminotransferase swnA, the latter being further reduced to PA by the reductase swnR. PA can be converted from lysine by both the SW biosynthetic cluster and the unclustered genes such as lysine cyclodeaminase. The PKS-NRPS hybrid synthetase swnK uptakes and condensates PA and malonyl-CoA with and without skipping of the ketoreductase (KR) domain in order to produce 3 intermediates, 1-oxoindolizidine, (1S)-1-hydroxyindolizin, and (1R)-1-hydroxyindolizine; with the transisomer (1S)-1-hydroxyindolizin being predominant. The terminal thioester reductase (TE) domain of swnK is involved in reduction of the thioester bond to release the intermediate aldehydes. The oxidoreductase swnN could contribute to the reduction of 1-oxoindolizidine to (1S)-1-hydroxyindolizin and (1R)-1-hydroxyindolizine, contributing to the major route of SW production. The dioxygenase swnH2 would be responsible for the oxidization of (1R)-1-hydroxyindolizine into (1R,2S)-1,2-dihydroxyindolizine and of (1S)-1-hydroxyindolizin to yield both (1R,2S)-1,2-dihydroxyindolizine and (1S,2S)-1,2-dihydroxyindolizine. The dioxygenase swnH1 then performs the conversion of the 1,2-dihydroxyindolizine epimers to SW. The sequence is that of PKS-NRPS hybrid synthetase swnK from Metarhizium robertsii (strain ARSEF 23 / ATCC MYA-3075) (Metarhizium anisopliae (strain ARSEF 23)).